The following is a 486-amino-acid chain: NGFI-A-binding protein 1 (486 aa).

The segment at 4–82 (ALPRTLGELQ…RDWVTNPGLF (79 aa)) is NCD1. Residues Lys126, Lys129, and Lys143 each participate in a glycyl lysine isopeptide (Lys-Gly) (interchain with G-Cter in SUMO2) cross-link. Residues 160-187 (WQGHHATESEHSLSPADLGSPASPKESS) form a disordered region. A phosphoserine mark is found at Ser171 and Ser182. Lys211 participates in a covalent cross-link: Glycyl lysine isopeptide (Lys-Gly) (interchain with G-Cter in SUMO2). The NCD2 stretch occupies residues 220 to 309 (LLKNNKKLAK…ARQVSREVTY (90 aa)). The tract at residues 306–337 (EVTYKYTYRTTRLKCGERDELSPKRIKIEDGF) is necessary for nuclear localization. Ser327 carries the phosphoserine modification. Lys332 is covalently cross-linked (Glycyl lysine isopeptide (Lys-Gly) (interchain with G-Cter in SUMO1); alternate). Lys332 is covalently cross-linked (Glycyl lysine isopeptide (Lys-Gly) (interchain with G-Cter in SUMO2); alternate). Glycyl lysine isopeptide (Lys-Gly) (interchain with G-Cter in SUMO2) cross-links involve residues Lys354, Lys368, and Lys372. The disordered stretch occupies residues 398–438 (RQSSGEQSPDGGLPSDSSDGQGERPLNLRIPSVQNRQPHHF). Over residues 404 to 417 (QSPDGGLPSDSSDG) the composition is skewed to low complexity. Phosphoserine is present on Ser405. Residues Lys453, Lys464, and Lys476 each participate in a glycyl lysine isopeptide (Lys-Gly) (interchain with G-Cter in SUMO2) cross-link. Residue Lys479 forms a Glycyl lysine isopeptide (Lys-Gly) (interchain with G-Cter in SUMO1); alternate linkage. Residue Lys479 forms a Glycyl lysine isopeptide (Lys-Gly) (interchain with G-Cter in SUMO2); alternate linkage.

Belongs to the NAB family. As to quaternary structure, homomultimers may associate with EGR1 bound to DNA. As to expression, widely expressed in adult. In day 16 embryo highest levels in forebrain, thymus, salivary gland and cartilage.

Its subcellular location is the nucleus. Acts as a transcriptional repressor for zinc finger transcription factors EGR1 and EGR2. The polypeptide is NGFI-A-binding protein 1 (Nab1) (Mus musculus (Mouse)).